Reading from the N-terminus, the 338-residue chain is Glycerol-3-phosphate dehydrogenase [NAD(P)+] (338 aa).

Residues serine 13, tryptophan 14, and lysine 108 each contribute to the NADPH site. Lysine 108, glycine 139, and serine 141 together coordinate sn-glycerol 3-phosphate. An NADPH-binding site is contributed by alanine 143. Sn-glycerol 3-phosphate-binding residues include lysine 194, aspartate 247, serine 257, arginine 258, and asparagine 259. Residue lysine 194 is the Proton acceptor of the active site. Arginine 258 is a binding site for NADPH. Positions 282 and 284 each coordinate NADPH.

It belongs to the NAD-dependent glycerol-3-phosphate dehydrogenase family.

The protein resides in the cytoplasm. The enzyme catalyses sn-glycerol 3-phosphate + NAD(+) = dihydroxyacetone phosphate + NADH + H(+). It carries out the reaction sn-glycerol 3-phosphate + NADP(+) = dihydroxyacetone phosphate + NADPH + H(+). Its pathway is membrane lipid metabolism; glycerophospholipid metabolism. Functionally, catalyzes the reduction of the glycolytic intermediate dihydroxyacetone phosphate (DHAP) to sn-glycerol 3-phosphate (G3P), the key precursor for phospholipid synthesis. The polypeptide is Glycerol-3-phosphate dehydrogenase [NAD(P)+] (Listeria innocua serovar 6a (strain ATCC BAA-680 / CLIP 11262)).